The following is a 145-amino-acid chain: Neutral phospholipase A2 paradoxin-like beta chain (145 aa).

The N-terminal stretch at methionine 1–leucine 27 is a signal peptide. 7 disulfide bridges follow: cysteine 38/cysteine 98, cysteine 54/cysteine 144, cysteine 56/cysteine 72, cysteine 71/cysteine 125, cysteine 78/cysteine 118, cysteine 87/cysteine 111, and cysteine 105/cysteine 116.

It belongs to the phospholipase A2 family. Group I subfamily. N49 sub-subfamily. As to quaternary structure, heterotrimer of alpha, beta, and gamma chains; non-covalently linked. In terms of tissue distribution, expressed by the venom gland.

It is found in the secreted. In terms of biological role, heterotrimer: Snake venom phospholipase A2 (PLA2) heterotrimer that acts as a potent presynaptic neurotoxin by blocking synaptic transmission and synaptic vesicle recycling. May act by binding in a calcium-dependent fashion to neurotonal pentraxin-1 (NPTX1) and neurotonal pentraxin-2 (NPTX2), but not to neuronal pentraxin receptor (NPTXR). Also binds to taipoxin-associated calcium binding protein 49 (RCN2), a protein localized in the lumen of endoplasmic reticulum. Monomer (beta chain): Snake venom phospholipase A2 homolog that is neither toxic nor enzymatically active. Does not bind calcium. This is Neutral phospholipase A2 paradoxin-like beta chain from Oxyuranus microlepidotus (Inland taipan).